The following is an 891-amino-acid chain: Protein translocase subunit SecA (891 aa).

ATP-binding positions include Gln83, 101–105, and Asp489; that span reads GEGKT.

It belongs to the SecA family.

The protein localises to the plastid. It is found in the chloroplast stroma. Its subcellular location is the chloroplast thylakoid membrane. The catalysed reaction is ATP + H2O + cellular proteinSide 1 = ADP + phosphate + cellular proteinSide 2.. Functionally, has a central role in coupling the hydrolysis of ATP to the transfer of proteins across the thylakoid membrane. The polypeptide is Protein translocase subunit SecA (Diacronema lutheri (Unicellular marine alga)).